Here is a 101-residue protein sequence, read N- to C-terminus: Ubiquitin-related modifier 1 (101 aa).

Gly-101 bears the 1-thioglycine mark. Residue Gly-101 forms a Glycyl lysine isopeptide (Gly-Lys) (interchain with K-? in acceptor proteins) linkage.

The protein belongs to the URM1 family. C-terminal thiocarboxylation occurs in 2 steps, it is first acyl-adenylated (-COAMP) via the hesA/moeB/thiF part of UBA4, then thiocarboxylated (-COSH) via the rhodanese domain of UBA4.

It is found in the cytoplasm. Its pathway is tRNA modification; 5-methoxycarbonylmethyl-2-thiouridine-tRNA biosynthesis. Functionally, acts as a sulfur carrier required for 2-thiolation of mcm(5)S(2)U at tRNA wobble positions of cytosolic tRNA(Lys), tRNA(Glu) and tRNA(Gln). Serves as sulfur donor in tRNA 2-thiolation reaction by being thiocarboxylated (-COSH) at its C-terminus by the MOCS3 homolog UBA4. The sulfur is then transferred to tRNA to form 2-thiolation of mcm(5)S(2)U. Prior mcm(5) tRNA modification by the elongator complex is required for 2-thiolation. Also acts as a ubiquitin-like protein (UBL) that is covalently conjugated via an isopeptide bond to lysine residues of target proteins such as AHP1. The thiocarboxylated form serves as substrate for conjugation and oxidative stress specifically induces the formation of UBL-protein conjugates. This is Ubiquitin-related modifier 1 from Candida albicans (strain SC5314 / ATCC MYA-2876) (Yeast).